We begin with the raw amino-acid sequence, 264 residues long: 3-methyl-2-oxobutanoate hydroxymethyltransferase (264 aa).

Residues Asp-45 and Asp-84 each contribute to the Mg(2+) site. Residues Asp-45–Ser-46, Asp-84, and Lys-112 contribute to the 3-methyl-2-oxobutanoate site. Glu-114 contributes to the Mg(2+) binding site. Glu-181 acts as the Proton acceptor in catalysis.

Belongs to the PanB family. Homodecamer; pentamer of dimers. Mg(2+) is required as a cofactor.

Its subcellular location is the cytoplasm. The catalysed reaction is 3-methyl-2-oxobutanoate + (6R)-5,10-methylene-5,6,7,8-tetrahydrofolate + H2O = 2-dehydropantoate + (6S)-5,6,7,8-tetrahydrofolate. It functions in the pathway cofactor biosynthesis; (R)-pantothenate biosynthesis; (R)-pantoate from 3-methyl-2-oxobutanoate: step 1/2. In terms of biological role, catalyzes the reversible reaction in which hydroxymethyl group from 5,10-methylenetetrahydrofolate is transferred onto alpha-ketoisovalerate to form ketopantoate. The sequence is that of 3-methyl-2-oxobutanoate hydroxymethyltransferase from Shewanella denitrificans (strain OS217 / ATCC BAA-1090 / DSM 15013).